Reading from the N-terminus, the 149-residue chain is MRMNKQIVVTDWIKEKPKLGLFLKLTLSSDERRILRGKRLTDCDQEIILQLPRNGKLNDGDILSTNESNFYVEIIAKTEDLIEISSNSKIELIKTAYHLGNRHVEVEIEEGILLTKSDYVIKNMLLNFKVNVKNTKKKFFPERGAHSHE.

It belongs to the UreE family.

It localises to the cytoplasm. Involved in urease metallocenter assembly. Binds nickel. Probably functions as a nickel donor during metallocenter assembly. The chain is Urease accessory protein UreE from Prochlorococcus marinus (strain AS9601).